The following is a 216-amino-acid chain: Superoxide dismutase [Mn], mitochondrial (216 aa).

The N-terminal 18 residues, 1–18, are a transit peptide targeting the mitochondrion; it reads MSFLNRNLSRTIKAAVRG. 4 residues coordinate Mn(2+): H44, H92, D176, and H180.

This sequence belongs to the iron/manganese superoxide dismutase family. It depends on Mn(2+) as a cofactor.

It is found in the mitochondrion matrix. It carries out the reaction 2 superoxide + 2 H(+) = H2O2 + O2. In terms of biological role, destroys superoxide anion radicals which are normally produced within the cells and which are toxic to biological systems. The protein is Superoxide dismutase [Mn], mitochondrial (Sod2) of Glossina morsitans morsitans (Savannah tsetse fly).